Consider the following 600-residue polypeptide: DNA ligase (600 aa).

Asp-258 serves as a coordination point for ATP. The active-site N6-AMP-lysine intermediate is Lys-260. The ATP site is built by Arg-265, Arg-280, Glu-310, Phe-350, Arg-427, and Lys-433.

The protein belongs to the ATP-dependent DNA ligase family. It depends on Mg(2+) as a cofactor.

It carries out the reaction ATP + (deoxyribonucleotide)n-3'-hydroxyl + 5'-phospho-(deoxyribonucleotide)m = (deoxyribonucleotide)n+m + AMP + diphosphate.. Its activity is regulated as follows. Inhibited by PCNA123 and PCNA323. Functionally, DNA ligase that seals nicks in double-stranded DNA during DNA replication, DNA recombination and DNA repair. This Sulfurisphaera tokodaii (strain DSM 16993 / JCM 10545 / NBRC 100140 / 7) (Sulfolobus tokodaii) protein is DNA ligase.